A 21-amino-acid polypeptide reads, in one-letter code: Brevinin-2-related peptide (21 aa).

Leucine 21 is modified (leucine amide).

Expressed by the skin glands.

Its subcellular location is the secreted. Antimicrobial peptide with activity against Gram-negative and Gram-positive bacteria (MIC=13 uM against E.coli, MIC=25 uM against S.aureus) and fungi (MIC=25 uM against C.albicans). Also shows hemolytic activity (HC(50)=50 uM). In vitro, shows moderate inhibitory activity against HIV. This Lithobates septentrionalis (Mink frog) protein is Brevinin-2-related peptide.